Reading from the N-terminus, the 186-residue chain is Bis(5'-nucleosyl)-tetraphosphatase, symmetrical (186 aa).

Residues 18–132 (RYIHTVGVMN…IYVADYIEPN (115 aa)) form the HD domain. His21 provides a ligand contact to ADP. Fe cation is bound by residues His21, His50, and Asp51. ADP contacts are provided by residues 51–54 (DYAK), His83, 109–110 (HT), Asp127, Arg133, and 170–175 (PVFPDT). Position 127 (Asp127) interacts with Fe cation.

This sequence belongs to the Ap4A hydrolase YqeK family. Homodimer.

The enzyme catalyses P(1),P(4)-bis(5'-adenosyl) tetraphosphate + H2O = 2 ADP + 2 H(+). In terms of biological role, hydrolyzes diadenosine 5',5'''-P1,P4-tetraphosphate (Ap4A) to yield ADP. The polypeptide is Bis(5'-nucleosyl)-tetraphosphatase, symmetrical (yqeK) (Bacillus subtilis (strain 168)).